The following is a 565-amino-acid chain: Translation machinery-associated protein 64 (565 aa).

The 82-residue stretch at 89 to 170 (LPIVLTHGFV…VAVKIIHHFN (82 aa)) folds into the PUA domain. The 86-residue stretch at 362-447 (TLYKPFNLAK…GEILHPLLTN (86 aa)) folds into the SWIB/MDM2 domain. The SUI1 domain maps to 475 to 547 (IKIITEMKIG…SIIDHLNKLG (73 aa)).

Belongs to the eIF2D family. In terms of assembly, interacts with the 40S ribosomal subunit.

This chain is Translation machinery-associated protein 64 (TMA64), found in Saccharomyces cerevisiae (strain ATCC 204508 / S288c) (Baker's yeast).